Reading from the N-terminus, the 389-residue chain is Anhydro-N-acetylmuramic acid kinase (389 aa).

11–18 (GTSLDGVD) serves as a coordination point for ATP.

This sequence belongs to the anhydro-N-acetylmuramic acid kinase family.

It catalyses the reaction 1,6-anhydro-N-acetyl-beta-muramate + ATP + H2O = N-acetyl-D-muramate 6-phosphate + ADP + H(+). The protein operates within amino-sugar metabolism; 1,6-anhydro-N-acetylmuramate degradation. It functions in the pathway cell wall biogenesis; peptidoglycan recycling. Its function is as follows. Catalyzes the specific phosphorylation of 1,6-anhydro-N-acetylmuramic acid (anhMurNAc) with the simultaneous cleavage of the 1,6-anhydro ring, generating MurNAc-6-P. Is required for the utilization of anhMurNAc either imported from the medium or derived from its own cell wall murein, and thus plays a role in cell wall recycling. The polypeptide is Anhydro-N-acetylmuramic acid kinase (Albidiferax ferrireducens (strain ATCC BAA-621 / DSM 15236 / T118) (Rhodoferax ferrireducens)).